The sequence spans 404 residues: Ubiquitin-like modifier-activating enzyme 5 (404 aa).

S45 carries the post-translational modification Phosphoserine. ATP is bound by residues G83, D104, K127, N150, and N184. Zn(2+) contacts are provided by C226 and C229. C250 functions as the Glycyl thioester intermediate in the catalytic mechanism. Residues C303 and C308 each coordinate Zn(2+). A UFM1-interacting sequence (UIS) motif is present at residues 334–346 (IIHEDNEWGIELV). Residues 347–377 (SEISEEELKKSSGPIPDLPEGIIVAYTVPQK) form a linker region. 2 positions are modified to phosphoserine: S358 and S393. Positions 389–404 (DSGESLEDLMAKMKNI) match the UFC1-binding sequence (UFC) motif.

It belongs to the ubiquitin-activating E1 family. UBA5 subfamily. Homodimer; homodimerization is required for UFM1 activation. Interacts (via UIS motif) with UFM1; binds UFM1 via a trans-binding mechanism in which UFM1 interacts with distinct sites in both subunits of the UBA5 homodimer. Interacts (via C-terminus) with UFC1. Interacts (via UIS motif) with GABARAPL2 and, with lower affinity, with GABARAP and GABARAPL1.

It localises to the cytoplasm. It is found in the nucleus. The protein resides in the endoplasmic reticulum membrane. Its subcellular location is the golgi apparatus. In terms of biological role, E1-like enzyme which specifically catalyzes the first step in ufmylation. Activates UFM1 by first adenylating its C-terminal glycine residue with ATP, and thereafter linking this residue to the side chain of a cysteine residue in E1, yielding a UFM1-E1 thioester and free AMP. Activates UFM1 via a trans-binding mechanism, in which UFM1 interacts with distinct sites in both subunits of the UBA5 homodimer. Trans-binding also promotes stabilization of the UBA5 homodimer, and enhances ATP-binding. Transfer of UFM1 from UBA5 to the E2-like enzyme UFC1 also takes place using a trans mechanism. Ufmylation plays a key role in various processes, such as ribosome recycling, response to DNA damage, interferon response or reticulophagy (also called ER-phagy). Ufmylation is essential for erythroid differentiation of both megakaryocytes and erythrocytes. In Bos taurus (Bovine), this protein is Ubiquitin-like modifier-activating enzyme 5.